The following is a 367-amino-acid chain: MTLLKRISSPALLALALFGGAAHAALVPPQGYYEGIEKLKTGDGNFRCEAAPKPYTGALQFRSKYEGSDKARATLNVASEKAFRKSTEDITTLEKGVSKMVGQYMRDGRPAQLDCTLAWLGTWARADALLSTDYNHTGKSMRKWALGSMSGSWLRLKFSHSQPLAAHQAEAEVIEKWFARLAEQTVRDWSDLPLEKINNHSYWAAWSVMATAVATDRRDLFDWAVKEYKVGANQVDDQGFLPNEIKRKQRALAYHNYALPPLAMIASFAQANGVDLRKENNFALQRLGEGVLAGARDPSQFKARTGEKQDMKDLKVDSKYAWLEPWCELYHCVGDTLQRKHGMQPFNSFRLGGDLTRVYDPNAESKK.

A signal peptide spans 1-24; it reads MTLLKRISSPALLALALFGGAAHA. Substrate is bound by residues 63–64, 136–137, and tyrosine 254; these read SK and HT.

Belongs to the polysaccharide lyase 5 family.

The protein resides in the periplasm. It catalyses the reaction Eliminative cleavage of alginate to give oligosaccharides with 4-deoxy-alpha-L-erythro-hex-4-enuronosyl groups at their non-reducing ends and beta-D-mannuronate at their reducing end.. In terms of biological role, catalyzes the depolymerization of alginate by cleaving the beta-1,4 glycosidic bond between two adjacent sugar residues via a beta-elimination mechanism. May serve to degrade mislocalized alginate that is trapped in the periplasmic space. This is Alginate lyase from Pseudomonas putida (strain GB-1).